Here is a 317-residue protein sequence, read N- to C-terminus: Anamorsin homolog 2 (317 aa).

Positions 1–162 (MAKKVGVLLF…KPSWDSASVF (162 aa)) are N-terminal SAM-like domain. Residues 163–229 (QLRKGSSQKG…EDDLLTEEDL (67 aa)) form a linker region. [2Fe-2S] cluster-binding residues include Cys240, Cys247, Cys250, and Cys252. The interval 240 to 252 (CAPTKKACKNCTC) is fe-S binding site A. Positions 278, 281, 289, and 292 each coordinate [4Fe-4S] cluster. Short sequence motifs (cx2C motif) lie at residues 278-281 (CGSC) and 289-292 (CAGC). Positions 278-292 (CGSCGLGDAFRCAGC) are fe-S binding site B.

The protein belongs to the anamorsin family. Monomer. It depends on [2Fe-2S] cluster as a cofactor. Requires [4Fe-4S] cluster as cofactor.

Its subcellular location is the cytoplasm. It localises to the mitochondrion intermembrane space. Functionally, component of the cytosolic iron-sulfur (Fe-S) protein assembly (CIA) machinery. Required for the maturation of extramitochondrial Fe-S proteins. Part of an electron transfer chain functioning in an early step of cytosolic Fe-S biogenesis, facilitating the de novo assembly of a [4Fe-4S] cluster on the cytosolic Fe-S scaffold complex. Electrons are transferred from NADPH via a FAD- and FMN-containing diflavin oxidoreductase. Together with the diflavin oxidoreductase, also required for the assembly of the diferric tyrosyl radical cofactor of ribonucleotide reductase (RNR), probably by providing electrons for reduction during radical cofactor maturation in the catalytic small subunit. The protein is Anamorsin homolog 2 of Physcomitrium patens (Spreading-leaved earth moss).